Consider the following 70-residue polypeptide: Phycobilisome 8.1 kDa linker polypeptide, phycocyanin-associated, rod (70 aa).

One can recognise a CpcD-like domain in the interval 5 to 63 (SRSFQVEVSGLHQNEVTNQNNYPIRSSGSVFITIPFSRFNEELQRINRLGGKIVNIQPL).

The protein belongs to the phycobilisome linker protein family.

It localises to the cellular thylakoid membrane. Functionally, rod linker protein, associated with phycocyanin. Linker polypeptides determine the state of aggregation and the location of the disk-shaped phycobiliprotein units within the phycobilisome and modulate their spectroscopic properties in order to mediate a directed and optimal energy transfer. In Microchaete diplosiphon (Fremyella diplosiphon), this protein is Phycobilisome 8.1 kDa linker polypeptide, phycocyanin-associated, rod (cpcD3).